Consider the following 408-residue polypeptide: Aminoacylase-1 (408 aa).

His76 provides a ligand contact to Zn(2+). Asp78 is an active-site residue. Asp109 serves as a coordination point for Zn(2+). Glu143 acts as the Proton acceptor in catalysis. Residues Glu144, Glu172, and His379 each contribute to the Zn(2+) site.

The protein belongs to the peptidase M20A family. Homodimer. It depends on Zn(2+) as a cofactor.

Its subcellular location is the cytoplasm. The enzyme catalyses an N-acyl-L-amino acid + H2O = an L-alpha-amino acid + a carboxylate. It catalyses the reaction an N-acetyl-L-cysteine-S-conjugate + H2O = an S-substituted L-cysteine + acetate. Its function is as follows. Involved in the hydrolysis of N-acylated or N-acetylated amino acids (except L-aspartate). The chain is Aminoacylase-1 (acy1) from Dictyostelium discoideum (Social amoeba).